The following is a 117-amino-acid chain: uncharacterized protein (117 aa).

The signal sequence occupies residues 1–23 (MVSEAEFMAALAKFAETSATASA).

This is an uncharacterized protein from Archaeoglobus fulgidus (strain ATCC 49558 / DSM 4304 / JCM 9628 / NBRC 100126 / VC-16).